Reading from the N-terminus, the 275-residue chain is Methylesterase 10 (275 aa).

Ser-96 (acyl-ester intermediate) is an active-site residue. Active-site charge relay system residues include Asp-225 and His-253.

The protein belongs to the AB hydrolase superfamily. Methylesterase family.

It catalyses the reaction methyl (-)-jasmonate + H2O = jasmonate + methanol + H(+). It functions in the pathway plant hormone biosynthesis. It participates in lipid metabolism; oxylipin biosynthesis. In terms of biological role, methylesterase shown to have methyl jasmonate (MeJA) esterase activity in vitro. This chain is Methylesterase 10, found in Arabidopsis thaliana (Mouse-ear cress).